We begin with the raw amino-acid sequence, 52 residues long: ATP synthase protein 8 (52 aa).

The chain crosses the membrane as a helical span at residues 7 to 23 (MMWFSLFIMFSMTMMLF).

The protein belongs to the ATPase protein 8 family. F-type ATPases have 2 components, CF(1) - the catalytic core - and CF(0) - the membrane proton channel.

The protein localises to the mitochondrion membrane. Its function is as follows. Mitochondrial membrane ATP synthase (F(1)F(0) ATP synthase or Complex V) produces ATP from ADP in the presence of a proton gradient across the membrane which is generated by electron transport complexes of the respiratory chain. F-type ATPases consist of two structural domains, F(1) - containing the extramembraneous catalytic core and F(0) - containing the membrane proton channel, linked together by a central stalk and a peripheral stalk. During catalysis, ATP synthesis in the catalytic domain of F(1) is coupled via a rotary mechanism of the central stalk subunits to proton translocation. Part of the complex F(0) domain. Minor subunit located with subunit a in the membrane. The polypeptide is ATP synthase protein 8 (MT-ATP8) (Locusta migratoria (Migratory locust)).